The primary structure comprises 692 residues: Threonine--tRNA ligase (692 aa).

Residues 1–20 (MSAPAQPAPGVDGGDPSQAR) form a disordered region. The TGS domain maps to 1–74 (MSAPAQPAPG…DVDTDITPVA (74 aa)). The segment at 269 to 575 (DHRKLGVELD…LTEHYAGAFP (307 aa)) is catalytic. Zn(2+)-binding residues include Cys374, His425, and His552.

This sequence belongs to the class-II aminoacyl-tRNA synthetase family. In terms of assembly, homodimer. The cofactor is Zn(2+).

Its subcellular location is the cytoplasm. It catalyses the reaction tRNA(Thr) + L-threonine + ATP = L-threonyl-tRNA(Thr) + AMP + diphosphate + H(+). Its function is as follows. Catalyzes the attachment of threonine to tRNA(Thr) in a two-step reaction: L-threonine is first activated by ATP to form Thr-AMP and then transferred to the acceptor end of tRNA(Thr). Also edits incorrectly charged L-seryl-tRNA(Thr). This is Threonine--tRNA ligase from Mycobacterium tuberculosis (strain CDC 1551 / Oshkosh).